Here is a 134-residue protein sequence, read N- to C-terminus: Profilin-4 (134 aa).

An intrachain disulfide couples C13 to C118. The Involved in PIP2 interaction signature appears at A84–T100. At T114 the chain carries Phosphothreonine.

It belongs to the profilin family. In terms of assembly, occurs in many kinds of cells as a complex with monomeric actin in a 1:1 ratio. Post-translationally, phosphorylated by MAP kinases.

The protein localises to the cytoplasm. It localises to the cytoskeleton. Binds to actin and affects the structure of the cytoskeleton. At high concentrations, profilin prevents the polymerization of actin, whereas it enhances it at low concentrations. This is Profilin-4 from Olea europaea (Common olive).